The chain runs to 501 residues: Aspartyl/glutamyl-tRNA(Asn/Gln) amidotransferase subunit B (501 aa).

The segment at 272–291 is disordered; the sequence is QETRHYQETDGTTSKGRPKE.

The protein belongs to the GatB/GatE family. GatB subfamily. In terms of assembly, heterotrimer of A, B and C subunits.

It carries out the reaction L-glutamyl-tRNA(Gln) + L-glutamine + ATP + H2O = L-glutaminyl-tRNA(Gln) + L-glutamate + ADP + phosphate + H(+). The catalysed reaction is L-aspartyl-tRNA(Asn) + L-glutamine + ATP + H2O = L-asparaginyl-tRNA(Asn) + L-glutamate + ADP + phosphate + 2 H(+). In terms of biological role, allows the formation of correctly charged Asn-tRNA(Asn) or Gln-tRNA(Gln) through the transamidation of misacylated Asp-tRNA(Asn) or Glu-tRNA(Gln) in organisms which lack either or both of asparaginyl-tRNA or glutaminyl-tRNA synthetases. The reaction takes place in the presence of glutamine and ATP through an activated phospho-Asp-tRNA(Asn) or phospho-Glu-tRNA(Gln). In Corynebacterium efficiens (strain DSM 44549 / YS-314 / AJ 12310 / JCM 11189 / NBRC 100395), this protein is Aspartyl/glutamyl-tRNA(Asn/Gln) amidotransferase subunit B.